A 63-amino-acid polypeptide reads, in one-letter code: Cytochrome c oxidase subunit 7C, mitochondrial (63 aa).

The transit peptide at methionine 1–arginine 16 directs the protein to the mitochondrion. The Mitochondrial matrix portion of the chain corresponds to serine 17–asparagine 33. Lysine 25 carries the post-translational modification N6-acetyllysine; alternate. N6-succinyllysine; alternate is present on lysine 25. The chain crosses the membrane as a helical span at residues lysine 34 to leucine 60. At leucine 61 to lysine 63 the chain is on the mitochondrial intermembrane side.

Belongs to the cytochrome c oxidase VIIc family. As to quaternary structure, component of the cytochrome c oxidase (complex IV, CIV), a multisubunit enzyme composed of 14 subunits. The complex is composed of a catalytic core of 3 subunits MT-CO1, MT-CO2 and MT-CO3, encoded in the mitochondrial DNA, and 11 supernumerary subunits COX4I, COX5A, COX5B, COX6A, COX6B, COX6C, COX7A, COX7B, COX7C, COX8 and NDUFA4, which are encoded in the nuclear genome. The complex exists as a monomer or a dimer and forms supercomplexes (SCs) in the inner mitochondrial membrane with NADH-ubiquinone oxidoreductase (complex I, CI) and ubiquinol-cytochrome c oxidoreductase (cytochrome b-c1 complex, complex III, CIII), resulting in different assemblies (supercomplex SCI(1)III(2)IV(1) and megacomplex MCI(2)III(2)IV(2)). Interacts with RAB5IF.

The protein resides in the mitochondrion inner membrane. The protein operates within energy metabolism; oxidative phosphorylation. Its function is as follows. Component of the cytochrome c oxidase, the last enzyme in the mitochondrial electron transport chain which drives oxidative phosphorylation. The respiratory chain contains 3 multisubunit complexes succinate dehydrogenase (complex II, CII), ubiquinol-cytochrome c oxidoreductase (cytochrome b-c1 complex, complex III, CIII) and cytochrome c oxidase (complex IV, CIV), that cooperate to transfer electrons derived from NADH and succinate to molecular oxygen, creating an electrochemical gradient over the inner membrane that drives transmembrane transport and the ATP synthase. Cytochrome c oxidase is the component of the respiratory chain that catalyzes the reduction of oxygen to water. Electrons originating from reduced cytochrome c in the intermembrane space (IMS) are transferred via the dinuclear copper A center (CU(A)) of subunit 2 and heme A of subunit 1 to the active site in subunit 1, a binuclear center (BNC) formed by heme A3 and copper B (CU(B)). The BNC reduces molecular oxygen to 2 water molecules using 4 electrons from cytochrome c in the IMS and 4 protons from the mitochondrial matrix. This Carlito syrichta (Philippine tarsier) protein is Cytochrome c oxidase subunit 7C, mitochondrial (COX7C).